We begin with the raw amino-acid sequence, 337 residues long: Glyceraldehyde-3-phosphate dehydrogenase 3, cytosolic (337 aa).

Residues 13–14 (RI), D35, and R82 contribute to the NAD(+) site. D-glyceraldehyde 3-phosphate contacts are provided by residues 153–155 (SCT), T184, 213–214 (TG), and R236. The active-site Nucleophile is C154. N318 is an NAD(+) binding site.

The protein belongs to the glyceraldehyde-3-phosphate dehydrogenase family. Homotetramer.

The protein resides in the cytoplasm. The catalysed reaction is D-glyceraldehyde 3-phosphate + phosphate + NAD(+) = (2R)-3-phospho-glyceroyl phosphate + NADH + H(+). The protein operates within carbohydrate degradation; glycolysis; pyruvate from D-glyceraldehyde 3-phosphate: step 1/5. Its function is as follows. Key enzyme in glycolysis that catalyzes the first step of the pathway by converting D-glyceraldehyde 3-phosphate (G3P) into 3-phospho-D-glyceroyl phosphate. Essential for the maintenance of cellular ATP levels and carbohydrate metabolism. In Oryza sativa subsp. japonica (Rice), this protein is Glyceraldehyde-3-phosphate dehydrogenase 3, cytosolic (GAPC3).